A 299-amino-acid chain; its full sequence is Tricarboxylate transport protein (299 aa).

Solcar repeat units follow at residues V10–M97, T109–L199, and L212–M297. Helical transmembrane passes span F16 to A36, I66 to I86, I113 to I133, G174 to Y193, G215 to L235, and G272 to Y291.

The protein belongs to the mitochondrial carrier (TC 2.A.29) family.

The protein resides in the mitochondrion inner membrane. In terms of biological role, transport of citrate across inner mitochondrial membrane. In Saccharomyces cerevisiae (strain ATCC 204508 / S288c) (Baker's yeast), this protein is Tricarboxylate transport protein (CTP1).